A 226-amino-acid chain; its full sequence is Protein GrpE (226 aa).

Disordered stretches follow at residues 1–31 (MTPNDTENAARPLPEGAVDPAQDAAGAPDTL) and 189–226 (VSKGGPKAAEASKPAGEAPKPAGEAPKPAGDGQKPAEA). Positions 192 to 218 (GGPKAAEASKPAGEAPKPAGEAPKPAG) are enriched in low complexity.

The protein belongs to the GrpE family. In terms of assembly, homodimer.

It is found in the cytoplasm. Functionally, participates actively in the response to hyperosmotic and heat shock by preventing the aggregation of stress-denatured proteins, in association with DnaK and GrpE. It is the nucleotide exchange factor for DnaK and may function as a thermosensor. Unfolded proteins bind initially to DnaJ; upon interaction with the DnaJ-bound protein, DnaK hydrolyzes its bound ATP, resulting in the formation of a stable complex. GrpE releases ADP from DnaK; ATP binding to DnaK triggers the release of the substrate protein, thus completing the reaction cycle. Several rounds of ATP-dependent interactions between DnaJ, DnaK and GrpE are required for fully efficient folding. This chain is Protein GrpE, found in Methylobacterium nodulans (strain LMG 21967 / CNCM I-2342 / ORS 2060).